A 1331-amino-acid polypeptide reads, in one-letter code: Receptor-type adenylate cyclase B (1331 aa).

Topologically, residues Met1 to Arg33 are cytoplasmic. The helical transmembrane segment at Leu34–Val54 threads the bilayer. At Pro55–Gly898 the chain is on the extracellular side. Asn255, Asn429, Asn558, Asn574, and Asn657 each carry an N-linked (GlcNAc...) asparagine glycan. A helical membrane pass occupies residues Gly899 to Leu919. Residues Tyr920 to His1331 are Cytoplasmic-facing. The Guanylate cyclase domain occupies Thr940–Glu1094. Positions 945 and 988 each coordinate Mg(2+).

The protein belongs to the adenylyl cyclase class-3 family. It depends on Mg(2+) as a cofactor.

The protein resides in the membrane. The catalysed reaction is ATP = 3',5'-cyclic AMP + diphosphate. In terms of biological role, could act as a receptor for an unknown ligand. The sequence is that of Receptor-type adenylate cyclase B (RAC-B) from Leishmania donovani.